Here is a 489-residue protein sequence, read N- to C-terminus: Cytochrome P450 monooxygenase ataF (489 aa).

The chain crosses the membrane as a helical span at residues 12 to 32 (WLEHSAVIATLFAFGTALFLV). N-linked (GlcNAc...) asparagine glycosylation occurs at Asn289. Cys434 contacts heme.

The protein belongs to the cytochrome P450 family. Heme is required as a cofactor.

It is found in the membrane. The protein operates within mycotoxin biosynthesis. Its function is as follows. Cytochrome P450 monooxygenase; part of the gene cluster that mediates the biosynthesis of acetylaranotin, a member of the epipolythiodioxopiperazine (ETP) class of toxins characterized by a disulfide-bridged cyclic dipeptide. The first step of acetylaranotin biosynthesis is performed by the NRPS ataP which produces diketopiperazine cyclo-L-Phe-L-Phe via the condensation of 2 phenylalanines (L-Phe). The ataC domain of ataTC then catalyzes the formation of bishydroxylation of cyclo-L-Phe-L-Phe. The glutathione S-transferase domain ataG in ataIMG further catalyzes the conjugation of two glutathiones to the bishydroxylated intermediate. Next, the dipeptidase ataJ removes the Glu residues. The following step is performed by the carbon sulfur lyase domain ataI of ataIMG which may convert the bis-cysteinyl adduct to yield an epidithiol intermediate. The ataT domain from ataTC then catalyzes the oxidation of the free dithiols, followed by a cyclization step catalyzed by the cytochrome P450 ataF. AtaF probably acts as an epoxidase to promote a dual epoxidation formation at C8 and C9 along with C8' and C9', followed by the spontaneous nucleophilic attack of the amide nitrogens N10 and N10' to yield an intermediate with the pyrrolidine partial structure. The final steps of acetylaranotin biosynthesis involve the acetylation and ring rearrangement of an epitetrathiodiketopiperazine intermediate to produce acetylaranotin. AtaH probably catalyzes the acetylation of epitetrathiodiketopiperazine to produce a diacetate and ataY is responsible for the formation of the dihydrooxepin moiety that converts the diacetate intermediate to acetylaranotin via acetylapoaranotin. Both enzymes could function independently in the absence of the other. The acetylaranotin bis-thiomethyltransferase ataS located outside of acetylaranotin gene cluster is the main thiomethyltransferase responsible for converting acetylaranotin and its related intermediates to their methylated forms. The polypeptide is Cytochrome P450 monooxygenase ataF (Aspergillus terreus (strain NIH 2624 / FGSC A1156)).